The sequence spans 1009 residues: 2-oxoglutarate dehydrogenase, mitochondrial (1009 aa).

Residues 1 to 39 (MLRFIPSSAKARALRRSAVTAYRLNRLTCLSSLQQNRTF) constitute a mitochondrion transit peptide. 5 residues coordinate thiamine diphosphate: R305, D404, N437, I439, and Q669. D404, N437, and I439 together coordinate Mg(2+).

It belongs to the alpha-ketoglutarate dehydrogenase family. Requires thiamine diphosphate as cofactor. The cofactor is Mg(2+).

It is found in the mitochondrion matrix. It carries out the reaction N(6)-[(R)-lipoyl]-L-lysyl-[protein] + 2-oxoglutarate + H(+) = N(6)-[(R)-S(8)-succinyldihydrolipoyl]-L-lysyl-[protein] + CO2. Its activity is regulated as follows. Catabolite repressed. Its function is as follows. The 2-oxoglutarate dehydrogenase complex catalyzes the overall conversion of 2-oxoglutarate to succinyl-CoA and CO(2). It contains multiple copies of three enzymatic components: 2-oxoglutarate dehydrogenase (E1), dihydrolipoamide succinyltransferase (E2) and lipoamide dehydrogenase (E3). The protein is 2-oxoglutarate dehydrogenase, mitochondrial (kgd1) of Schizosaccharomyces pombe (strain 972 / ATCC 24843) (Fission yeast).